The primary structure comprises 327 residues: MRLNDGRSFSCRSDQTVLHAALAAGIDMPYECASGSCGSCRCRLSHGSVSLLWPEAPGLSARDRQKGDRILACQSTPSSDLEINVRAGDALLEPPPRRHAARVTVKETLCASVIRLVLNVGGPIHFLPGQFFILDLPGAGRRAYSVANLENAAGGIELLIKRKIGGAGTAALFDQCAPGMGLVIEGPYGRAYLRADSARGIVAVAGGSGLAPMLSILRGALARGFGGPMDLYFGVNTAEELFCVPELSALQAAGARVHLALRDGGPGPAGLHRQAGLIGDALVAGEPDLKAKDLYVAGPAPMTDDILARTVRQEAIPADRVFFDRFV.

Residues 1-89 form the 2Fe-2S ferredoxin-type domain; the sequence is MRLNDGRSFS…DLEINVRAGD (89 aa). [2Fe-2S] cluster contacts are provided by cysteine 32, cysteine 37, cysteine 40, and cysteine 73. The FAD-binding FR-type domain occupies 96–194; that stretch reads PRRHAARVTV…EGPYGRAYLR (99 aa).

The protein belongs to the bacterial ring-hydroxylating dioxygenase ferredoxin reductase family. As to quaternary structure, monomer. The alkene monooxygenase multicomponent enzyme system is composed of an electron transfer component and a monooxygenase component interacting with the effector protein XamoD. The electron transfer component is composed of a ferredoxin reductase (XamoF) and a ferredoxin (XamoC), and the monooxygenase component is formed by a heterohexamer (dimer of heterotrimers) of two alpha subunits (XamoA), two beta subunits (XamoE) and two gamma subunits (XamoB). FAD is required as a cofactor. [2Fe-2S] cluster serves as cofactor.

It localises to the cytoplasm. It catalyses the reaction 2 reduced [2Fe-2S]-[ferredoxin] + NAD(+) + H(+) = 2 oxidized [2Fe-2S]-[ferredoxin] + NADH. Its function is as follows. Reductase component of the alkene monooxygenase multicomponent enzyme system which catalyzes the O2- and NADH-dependent epoxidation of short chain (C2 to C6) alkenes to their corresponding epoxides. Ferredoxin reductase catalyzes the transfer of electrons from NADH to ferredoxin (XamoC). NADPH is also effective but with a rate approximately 3-fold lower than with NADH. The polypeptide is Alkene monooxygenase system, ferredoxin--NAD(+) reductase component (Xanthobacter autotrophicus (strain ATCC BAA-1158 / Py2)).